The following is a 266-amino-acid chain: Pre-mRNA-splicing factor PRP11 (266 aa).

The tract at residues 1–21 (MNYLEGVGSKKGGGGIASESQ) is disordered. The segment at 66-96 (LVCKLCNTMHMSWSSVERHLGGKKHGLNVLR) adopts a Matrin-type zinc-finger fold.

Belongs to the SF3A2 family. Belongs to the CWC complex (or CEF1-associated complex), a spliceosome sub-complex reminiscent of a late-stage spliceosome composed of the U2, U5 and U6 snRNAs and at least BUD13, BUD31, BRR2, CDC40, CEF1, CLF1, CUS1, CWC2, CWC15, CWC21, CWC22, CWC23, CWC24, CWC25, CWC27, ECM2, HSH155, IST3, ISY1, LEA1, MSL1, NTC20, PRP8, PRP9, PRP11, PRP19, PRP21, PRP22, PRP45, PRP46, SLU7, SMB1, SMD1, SMD2, SMD3, SMX2, SMX3, SNT309, SNU114, SPP2, SYF1, SYF2, RSE1 and YJU2. Interacts with CUS2.

Its subcellular location is the nucleus. MRNA splicing factors, PRP9, PRP11, and PRP21, are necessary for addition of the U2 snRNP to the pre-mRNA in an early step of spliceosome assembly. This chain is Pre-mRNA-splicing factor PRP11 (PRP11), found in Saccharomyces cerevisiae (strain ATCC 204508 / S288c) (Baker's yeast).